Here is a 125-residue protein sequence, read N- to C-terminus: Cytochrome c-556 (125 aa).

Heme is bound by residues Met-13, Cys-113, Cys-116, and His-117. Heme c contacts are provided by Met-13, Cys-113, Cys-116, and His-117.

As to quaternary structure, monomer. Binds 1 heme c group covalently per subunit.

In terms of biological role, low-spin monoheme cytochrome c. This Agrobacterium tumefaciens (strain apple 185) protein is Cytochrome c-556.